A 178-amino-acid polypeptide reads, in one-letter code: uncharacterized protein (178 aa).

The protein belongs to the mimivirus L114/R131 family.

This is an uncharacterized protein from Acanthamoeba polyphaga mimivirus (APMV).